The primary structure comprises 158 residues: uncharacterized protein (158 aa).

The protein belongs to the mimivirus L223/L227/L812 family.

This is an uncharacterized protein from Acanthamoeba polyphaga mimivirus (APMV).